The chain runs to 354 residues: Fructose-bisphosphate aldolase (354 aa).

Position 61 (Ser61) interacts with D-glyceraldehyde 3-phosphate. Asp104 serves as the catalytic Proton donor. Zn(2+)-binding residues include His105, Asp139, Glu169, and His221. Position 222 (Gly222) interacts with dihydroxyacetone phosphate. His260 lines the Zn(2+) pocket. Dihydroxyacetone phosphate contacts are provided by residues Gly261 to Ser263 and Asn282 to Thr285.

It belongs to the class II fructose-bisphosphate aldolase family. In terms of assembly, homodimer. Requires Zn(2+) as cofactor.

The catalysed reaction is beta-D-fructose 1,6-bisphosphate = D-glyceraldehyde 3-phosphate + dihydroxyacetone phosphate. The protein operates within carbohydrate degradation; glycolysis; D-glyceraldehyde 3-phosphate and glycerone phosphate from D-glucose: step 4/4. Catalyzes the aldol condensation of dihydroxyacetone phosphate (DHAP or glycerone-phosphate) with glyceraldehyde 3-phosphate (G3P) to form fructose 1,6-bisphosphate (FBP) in gluconeogenesis and the reverse reaction in glycolysis. In Campylobacter jejuni subsp. jejuni serotype O:23/36 (strain 81-176), this protein is Fructose-bisphosphate aldolase (fba).